Consider the following 352-residue polypeptide: Quinolinate synthase (352 aa).

Iminosuccinate-binding residues include H48 and S69. Position 114 (C114) interacts with [4Fe-4S] cluster. Residues 140 to 142 and S157 contribute to the iminosuccinate site; that span reads YAN. C201 is a [4Fe-4S] cluster binding site. Iminosuccinate is bound by residues 227 to 229 and T244; that span reads HPE. C298 is a [4Fe-4S] cluster binding site.

The protein belongs to the quinolinate synthase family. Type 1 subfamily. Requires [4Fe-4S] cluster as cofactor.

Its subcellular location is the cytoplasm. It carries out the reaction iminosuccinate + dihydroxyacetone phosphate = quinolinate + phosphate + 2 H2O + H(+). It participates in cofactor biosynthesis; NAD(+) biosynthesis; quinolinate from iminoaspartate: step 1/1. Its function is as follows. Catalyzes the condensation of iminoaspartate with dihydroxyacetone phosphate to form quinolinate. This Pseudomonas putida (strain ATCC 700007 / DSM 6899 / JCM 31910 / BCRC 17059 / LMG 24140 / F1) protein is Quinolinate synthase.